An 869-amino-acid chain; its full sequence is Serendipity locus protein H-1 (869 aa).

Basic and acidic residues predominate over residues 1–17 (MEGGKGEGKRMKEEAPS). Disordered regions lie at residues 1 to 32 (MEGG…AGTP) and 134 to 165 (FSVT…TPVK). Polar residues predominate over residues 146–164 (AFTNSPFKKTSSSGTSTPV). 8 C2H2-type zinc fingers span residues 269 to 293 (HKCL…AAAH), 299 to 321 (YRCS…LKTH), 331 to 352 (KKCP…RKIH), 358 to 380 (YQCD…ARIH), 386 to 408 (YECP…QKYH), 414 to 436 (YRCE…NLVH), 442 to 464 (FACT…SNIH), and 470 to 493 (FKCN…RRRH). 2 disordered regions span residues 554 to 573 (TSTA…QPQQ) and 617 to 652 (PKQT…SSLE). The span at 630–648 (APKQLQQKPQLLQQGQPQQ) shows a compositional bias: low complexity.

As to expression, distribution varies between nurse cells and the oocyte during oogenesis. Weakly expressed in follicle and border cells.

Its subcellular location is the nucleus. Its function is as follows. May belong to a complex set of multifingered proteins which play an important role in gene activation or regulation at early embryonic stages through a maximal accumulation of their transcripts (or protein product) in the mature oocyte. The polypeptide is Serendipity locus protein H-1 (wdn) (Drosophila melanogaster (Fruit fly)).